Reading from the N-terminus, the 196-residue chain is Protein GrpE (196 aa).

Positions 1–41 (MSSKEQKTPEGQAPEEIITEQHDDVEAVEPEVSAEQVDPRD) are disordered.

The protein belongs to the GrpE family. As to quaternary structure, homodimer.

It is found in the cytoplasm. Its function is as follows. Participates actively in the response to hyperosmotic and heat shock by preventing the aggregation of stress-denatured proteins, in association with DnaK and GrpE. It is the nucleotide exchange factor for DnaK and may function as a thermosensor. Unfolded proteins bind initially to DnaJ; upon interaction with the DnaJ-bound protein, DnaK hydrolyzes its bound ATP, resulting in the formation of a stable complex. GrpE releases ADP from DnaK; ATP binding to DnaK triggers the release of the substrate protein, thus completing the reaction cycle. Several rounds of ATP-dependent interactions between DnaJ, DnaK and GrpE are required for fully efficient folding. This chain is Protein GrpE, found in Klebsiella pneumoniae subsp. pneumoniae (strain ATCC 700721 / MGH 78578).